The chain runs to 1195 residues: Chromosome partition protein Smc (1195 aa).

Position 33–40 (33–40 (PNGSGKSN)) interacts with ATP. Coiled-coil stretches lie at residues 185-241 (GVAQ…RQEQ), 273-348 (DAAT…IQAL), and 380-528 (QYQQ…QETQ). The 117-residue stretch at 542–658 (PGVHGLVAQL…FERLDQARRY (117 aa)) folds into the SMC hinge domain. A coiled-coil region spans residues 698–1043 (GESAEVRAIR…ELLLRIENFT (346 aa)).

Belongs to the SMC family. Homodimer.

It is found in the cytoplasm. Functionally, required for chromosome condensation and partitioning. The chain is Chromosome partition protein Smc from Synechococcus sp. (strain ATCC 27144 / PCC 6301 / SAUG 1402/1) (Anacystis nidulans).